The sequence spans 92 residues: C-C motif chemokine 4 (92 aa).

Residues 1-23 form the signal peptide; that stretch reads MKLCVTVLSLLVLVAAFCSPALS. 2 disulfide bridges follow: C34-C58 and C35-C74.

It belongs to the intercrine beta (chemokine CC) family. As to quaternary structure, homodimer. Interacts with CCR5.

The protein localises to the secreted. In terms of biological role, monokine with inflammatory and chemokinetic properties. The polypeptide is C-C motif chemokine 4 (CCL4) (Sus scrofa (Pig)).